Reading from the N-terminus, the 409-residue chain is 3-dehydro-bile acid delta(4,6)-reductase (409 aa).

Positions 12, 33, 131, 378, 390, and 391 each coordinate FAD.

The protein belongs to the BaiN/RdsA family. BaiN subfamily. FAD serves as cofactor.

It carries out the reaction 3-oxocholan-24-oyl-CoA + NAD(+) = 3-oxochol-4-en-24-oyl-CoA + NADH + H(+). The catalysed reaction is 3-oxochol-4-en-24-oyl-CoA + NAD(+) = 3-oxochol-4,6-dien-24-oyl-CoA + NADH + H(+). The enzyme catalyses 12alpha-hydroxy-3-oxocholan-24-oyl-CoA + NAD(+) = 12alpha-hydroxy-3-oxochol-4-en-24-oyl-CoA + NADH + H(+). It catalyses the reaction 12alpha-hydroxy-3-oxochol-4-en-24-oyl-CoA + NAD(+) = 12alpha-hydroxy-3-oxochola-4,6-dien-24-oyl-CoA + NADH + H(+). Its pathway is lipid metabolism; bile acid degradation. In terms of biological role, involved in the secondary bile acid metabolism. Catalyzes two subsequent reductions of the double bonds within the bile acid A/B rings of 3-oxochol-4,6-dien-24-oyl-CoA and 12alpha-hydroxy-3-oxochol-4,6-dien-24-oyl-CoA to yield 3-oxocholan-24-oyl-CoA and 12alpha-hydroxy-3-oxocholan-24-oyl-CoA, respectively. This Clostridium scindens (strain ATCC 35704 / DSM 5676 / VPI 13733 / 19) protein is 3-dehydro-bile acid delta(4,6)-reductase.